Here is a 311-residue protein sequence, read N- to C-terminus: Succinate dehydrogenase [ubiquinone] iron-sulfur subunit 2, mitochondrial (311 aa).

A mitochondrion-targeting transit peptide spans methionine 1–aspartate 63. The tract at residues methionine 1–alanine 70 is disordered. A compositionally biased stretch (basic and acidic residues) spans alanine 51 to aspartate 63. Residues phenylalanine 77–methionine 168 form the 2Fe-2S ferredoxin-type domain. Positions 128, 133, and 148 each coordinate [2Fe-2S] cluster. A 4Fe-4S ferredoxin-type domain is found at glutamate 211–phenylalanine 241. The [4Fe-4S] cluster site is built by cysteine 221, cysteine 224, and cysteine 227. Position 231 (cysteine 231) interacts with [3Fe-4S] cluster. A ubiquinone is bound at residue tryptophan 236. 2 residues coordinate [3Fe-4S] cluster: cysteine 279 and cysteine 285. A [4Fe-4S] cluster-binding site is contributed by cysteine 289.

It belongs to the succinate dehydrogenase/fumarate reductase iron-sulfur protein family. Component of complex II composed of eight subunits in plants: four classical SDH subunits SDH1, SDH2, SDH3 and SDH4 (a flavoprotein (FP), an iron-sulfur protein (IP), and a cytochrome b composed of a large and a small subunit.), as well as four subunits unknown in mitochondria from bacteria and heterotrophic eukaryotes. Requires [2Fe-2S] cluster as cofactor. It depends on [3Fe-4S] cluster as a cofactor. [4Fe-4S] cluster is required as a cofactor.

Its subcellular location is the mitochondrion inner membrane. It carries out the reaction a quinone + succinate = fumarate + a quinol. The protein operates within carbohydrate metabolism; tricarboxylic acid cycle; fumarate from succinate (eukaryal route): step 1/1. Iron-sulfur protein (IP) subunit of succinate dehydrogenase (SDH) that is involved in complex II of the mitochondrial electron transport chain and is responsible for transferring electrons from succinate to ubiquinone (coenzyme Q). This chain is Succinate dehydrogenase [ubiquinone] iron-sulfur subunit 2, mitochondrial, found in Oryza sativa subsp. japonica (Rice).